The primary structure comprises 108 residues: UPF0145 protein sll118 (108 aa).

The protein belongs to the UPF0145 family.

This is UPF0145 protein sll118 from Synechocystis sp. (strain ATCC 27184 / PCC 6803 / Kazusa).